The chain runs to 234 residues: Elongation factor Tu, chloroplastic (234 aa).

The tr-type G domain maps to 1–125; the sequence is KNMITGAAQM…KVDSYIPTPE (125 aa). Residue 47-50 coordinates GTP; sequence NKQD.

The protein belongs to the TRAFAC class translation factor GTPase superfamily. Classic translation factor GTPase family. EF-Tu/EF-1A subfamily.

The protein localises to the plastid. It localises to the chloroplast. It catalyses the reaction GTP + H2O = GDP + phosphate + H(+). Functionally, GTP hydrolase that promotes the GTP-dependent binding of aminoacyl-tRNA to the A-site of ribosomes during protein biosynthesis. The protein is Elongation factor Tu, chloroplastic (tufA) of Pandorina morum (Freshwater green alga).